We begin with the raw amino-acid sequence, 504 residues long: MSFSVDVLANIAIELQRGIGHQDRFQRLITTLRQVLECDASALLRYDSRQFIPLAIDGLAKDVLGRRFALEGHPRLEAIARAGDVVRFPADSELPDPYDGLIPGQESLKVHACVGLPLFAGQNLIGALTLDGMQPDQFDVFSDEELRLIAALAAGALSNALLIEQLESQNMMPGDATPFEAVKQTQMIGLSPGMTQLKKEIEIVAASDLNVLISGETGTGKELVAKAIHEASPRAVNPLVYLNCAALPESVAESELFGHVKGAFTGAISNRSGKFEMADNGTLFLDEIGELSLALQAKLLRVLQYGDIQRVGDDRSLRVDVRVLAATNRDLREEVMAGRFRADLFHRLSVFPLSVPPLRERGDDVILLAGYFCEQCRLRLGLSRVVLSAGARNLLQHYRFPGNVRELEHAIHRAVVLARATRNGDEVILEAQHFAFPEVTLPPPEAAAVPVVKQNLREATEAFQRETIRQALAQNHHNWAACARMLETDVANLHRLAKRLGMKD.

A 4-aspartylphosphate modification is found at Asp-57. The Sigma-54 factor interaction domain occupies 187 to 416; it reads MIGLSPGMTQ…LEHAIHRAVV (230 aa). ATP contacts are provided by residues 215-222 and 278-287; these read GETGTGKE and ADNGTLFLDE. Positions 479–498 form a DNA-binding region, H-T-H motif; that stretch reads WAACARMLETDVANLHRLAK.

It functions in the pathway nitrogen metabolism; nitric oxide reduction. Functionally, required for the expression of anaerobic nitric oxide (NO) reductase, acts as a transcriptional activator for at least the norVW operon. Activation also requires sigma-54. The polypeptide is Anaerobic nitric oxide reductase transcription regulator NorR (Shigella sonnei (strain Ss046)).